We begin with the raw amino-acid sequence, 199 residues long: Potassium-transporting ATPase KdpC subunit (199 aa).

The chain crosses the membrane as a helical span at residues 21–43 (LALLFVCGVVYTGTVTQLGGALF).

The protein belongs to the KdpC family. The system is composed of three essential subunits: KdpA, KdpB and KdpC.

Its subcellular location is the cell inner membrane. Functionally, part of the high-affinity ATP-driven potassium transport (or Kdp) system, which catalyzes the hydrolysis of ATP coupled with the electrogenic transport of potassium into the cytoplasm. This subunit acts as a catalytic chaperone that increases the ATP-binding affinity of the ATP-hydrolyzing subunit KdpB by the formation of a transient KdpB/KdpC/ATP ternary complex. The sequence is that of Potassium-transporting ATPase KdpC subunit from Shewanella putrefaciens (strain CN-32 / ATCC BAA-453).